Reading from the N-terminus, the 127-residue chain is MAKISQDVSSSRSKARKAYFTASSVERRVLLSAPLSKELRQQYNVKSLPIRQNDEVLVVRGSKKGSEGKVNSVYRLKFAIQVDKLQKEKSNGASVPINIHPSKVVITKLHLDKDRKALIQRKGGKAE.

Belongs to the universal ribosomal protein uL24 family. Component of the large ribosomal subunit. Mature ribosomes consist of a small (40S) and a large (60S) subunit. The 40S subunit contains about 32 different proteins and 1 molecule of RNA (18S). The 60S subunit contains 45 different proteins and 3 molecules of RNA (25S, 5.8S and 5S).

The protein resides in the cytoplasm. Its function is as follows. Component of the ribosome, a large ribonucleoprotein complex responsible for the synthesis of proteins in the cell. The small ribosomal subunit (SSU) binds messenger RNAs (mRNAs) and translates the encoded message by selecting cognate aminoacyl-transfer RNA (tRNA) molecules. The large subunit (LSU) contains the ribosomal catalytic site termed the peptidyl transferase center (PTC), which catalyzes the formation of peptide bonds, thereby polymerizing the amino acids delivered by tRNAs into a polypeptide chain. The nascent polypeptides leave the ribosome through a tunnel in the LSU and interact with protein factors that function in enzymatic processing, targeting, and the membrane insertion of nascent chains at the exit of the ribosomal tunnel. The polypeptide is Large ribosomal subunit protein uL24 (Candida albicans (strain SC5314 / ATCC MYA-2876) (Yeast)).